A 226-amino-acid polypeptide reads, in one-letter code: Spermatogenesis-associated protein 25 (226 aa).

Residues 153-173 (ICILTLAMMIAGIPTVPVPGL) form a helical membrane-spanning segment.

The protein belongs to the SPATA25 family. As to expression, expressed strongly in testis, weakly in epididymis and not detected in other tissues.

Its subcellular location is the membrane. Functionally, may play a role in spermatogenesis. This Mus musculus (Mouse) protein is Spermatogenesis-associated protein 25 (Spata25).